We begin with the raw amino-acid sequence, 476 residues long: MTKLRSKWLGLRSVTIFLINFSLAFAFVSAERRGKSLRLSTDETRENESSFFLKAINFLWESDQIGYRHVWPEFEFNWQIVLGTLVGFFGAAFGSVGGVGGGGIFVPMLSLIIGFDPKSATAISKCMIMGASVSTVYYNLRLRHPTLDMPIIDYDLALLIQPMLMLGISIGVAFNVIFPDWLVTVLLIVLFLGTSTKAFLKGSETWNKETIEKKEAAKRLESNGVSGTEVEYVPLPAAPSTNPGNKKKEEVSIIENVYWKELGLLVFVWIVFLALQISKQNLANCSVAYWVINLLQIPVAVGVSGYEAVALYQGRRIIASKGQGDSNFTVGQLVMYCTFGIIAGIVGGLLGLGGGFIMGPLFLELGVPPQVSSATATFAMTFSSSMSVVEYYLLKRFPVPYALYLVGVATIAAWVGQHVVRRLIAAIGRASLIIFILASMIFISAISLGGVGIVNMIGKIQRHEYMGFENLCKYGG.

The next 12 membrane-spanning stretches (helical) occupy residues 8 to 28 (WLGL…FAFV), 76 to 92 (FNWQ…FGAA), 99 to 115 (VGGG…IIGF), 120 to 142 (ATAI…NLRL), 151 to 171 (IIDY…ISIG), 172 to 192 (VAFN…VLFL), 257 to 277 (VYWK…ALQI), 291 to 311 (VINL…AVAL), 339 to 359 (FGII…FIMG), 360 to 380 (PLFL…TFAM), 397 to 417 (FPVP…WVGQ), and 433 to 453 (IIFI…GVGI).

This sequence belongs to the 4-toluene sulfonate uptake permease (TSUP) (TC 2.A.102) family.

The protein resides in the membrane. The chain is Sulfite exporter TauE/SafE family protein 3 from Arabidopsis thaliana (Mouse-ear cress).